The primary structure comprises 739 residues: Glycine--tRNA ligase (739 aa).

Residues 1-36 (MPSPRPVLLRGARAALLLLLPPRLLARPSLLLRRSL) constitute a mitochondrion transit peptide. The residue at position 35 (Ser-35) is a Phosphoserine. The 57-residue stretch at 63–119 (VLAPLRLAVRQQGDLVRKLKEDKAPQVDVDKAVAELKARKRVLEAKELALQPKDDIV) folds into the WHEP-TRS domain. Lys-204 is modified (N6-acetyllysine). Residue Glu-299 coordinates glycine. ATP is bound by residues 331 to 333 (RNE) and 342 to 343 (RV). Glu-350 provides a ligand contact to glycine. Tyr-453 is subject to Phosphotyrosine. Position 457–458 (457–458 (EI)) interacts with ATP. An N6-acetyllysine modification is found at Lys-501. A glycine-binding site is contributed by 576–578 (EPS). An ATP-binding site is contributed by Arg-583. Phosphoserine is present on Ser-700. Thr-736 carries the post-translational modification Phosphothreonine.

Belongs to the class-II aminoacyl-tRNA synthetase family. In terms of assembly, homodimer. As to expression, widely expressed, including in brain and spinal cord. In terms of tissue distribution, expressed in brain, spinal cord, muscle, heart and spleen. Expressed in brain, spinal cord, muscle, heart, spleen and liver.

It is found in the cytoplasm. It localises to the cell projection. Its subcellular location is the axon. The protein localises to the secreted. The protein resides in the extracellular exosome. It is found in the mitochondrion. The catalysed reaction is tRNA(Gly) + glycine + ATP = glycyl-tRNA(Gly) + AMP + diphosphate. The enzyme catalyses 2 ATP + H(+) = P(1),P(4)-bis(5'-adenosyl) tetraphosphate + diphosphate. With respect to regulation, ap4A synthesis is inhibited by tRNA, via the disruption of the second ATP-binding site by direct blocking and/or by tRNA-induced conformational change. Catalyzes the ATP-dependent ligation of glycine to the 3'-end of its cognate tRNA, via the formation of an aminoacyl-adenylate intermediate (Gly-AMP). Also produces diadenosine tetraphosphate (Ap4A), a universal pleiotropic signaling molecule needed for cell regulation pathways, by direct condensation of 2 ATPs. Thereby, may play a special role in Ap4A homeostasis. This chain is Glycine--tRNA ligase, found in Homo sapiens (Human).